We begin with the raw amino-acid sequence, 1054 residues long: MTIIVASLFLPYTPQFEADVTNSDTAKLVESSMIKVDCNNQELSNNKQERSSSVTSASSHYIGLPQEAQINGEPLQRANVGSPATGVNYHNEMEMLSSEQFLEELTANATHAANSGIPPANNPVSSGSTAQRPSVEEFFSAPSARVCSPSQEASASSISASRSSAHHNDLSSSLMKNPNLSFDSHPPRVRSSSKSAVITPVSKSVPDVDPAVVDVAKVREEFQQQASLPSMKRVSGSTAGDSSIASSSSNLRYSQQFQDNFIEDTDSEDDIDSDLETDATKKYNVPKFGGYSNNAKLRASLMRNSYELFKHLPWTIVDSDKGNGSLKNAVNIAVAEKTVKEPVSWVGTMGIPTDELPHEVCHKISKKLEQDFSSFPVVTDDITFKGAYKNYAKQILWPTLHYQIPDNPNSKAFEDHSWDYYQKVNQKFSDRIVSVYKPGDTIWIHDYHLMLVPQMVREKLPKAKIGFFLHVSFPSSEVFRCLANRERILEGIIGANFVGFQTKEYKRHFLQTCNRLLAADVSNDEVKYHCNIVSVMYAPIGIDYYHLTSQLRNGSVLEWRQLIKERWRNKKLIVCRDQFDRIRGLQKKMLAYERFLIENPEYIEKVVLIQICIGKSSDPEYERQIMVVVDRINSLSSNISISQPVVFLHQDLDFAQYLALNCEADVFLVDALREGMNLTCHEFIVSSFEKNAPLLLSEFTGSSSVLKEGAILINPWDINHVAQSIKRSLEMSPEEKRRRWKKLFKSVIEHDSDNWITKCFEYINNAWESNQETSTVFNLAPEKFCADYKASKKHLFIFKISEPPTSRMLSLLSELSSNNIVYVLSSFTKNTFESLYNGVLNIGLIAENGAYVRVNGSWYNIVEELDWMKEVAKIFDEKVERLPGSYYKIADSMIRFHTENADDQDRVPTVIGEAITHINTLFDDRDIHAYVHKDIVFVQQTGLALAAAEFLMKFYNSGVSPTDNSRISLSRTSSSMSVGNNKKHFQNQVDFVCVSGSTSPIIEPLFKLVKQEVEKNNLKFGYTILYGSSRSTYAKEHINGVNELFTILHDLTAA.

The segment at 112–133 is disordered; the sequence is AANSGIPPANNPVSSGSTAQRP. Residues 122–132 are compositionally biased toward polar residues; that stretch reads NPVSSGSTAQR. 3 positions are modified to phosphoserine: serine 148, serine 150, and serine 181. 2 disordered regions span residues 155-203 and 223-250; these read ASSI…PVSK and QQQASLPSMKRVSGSTAGDSSIASSSSN. Over residues 170-182 the composition is skewed to polar residues; the sequence is LSSSLMKNPNLSF. Residues 235 to 249 show a composition bias toward low complexity; it reads SGSTAGDSSIASSSS. Phosphothreonine is present on threonine 265. Serine 267 and serine 273 each carry phosphoserine. The glycosyltransferase stretch occupies residues 287–778; the sequence is KFGGYSNNAK…SNQETSTVFN (492 aa). A Phosphoserine modification is found at serine 960.

This sequence in the N-terminal section; belongs to the glycosyltransferase 20 family. As to quaternary structure, the trehalose synthase complex is composed of the two catalytic subunits TPS1 and TPS2 and at least one of the two regulatory subunits TPS3 or TSL1.

It is found in the cytoplasm. Functionally, regulatory subunit of the trehalose synthase complex that catalyzes the production of trehalose from glucose-6-phosphate and UDP-glucose in a two step process. May stabilize the trehalose synthase complex. This chain is Trehalose synthase complex regulatory subunit TPS3 (TPS3), found in Saccharomyces cerevisiae (strain ATCC 204508 / S288c) (Baker's yeast).